The primary structure comprises 348 residues: uncharacterized protein (348 aa).

Positions 41 and 170 each coordinate NADP(+). At Ser-339 the chain carries Phosphoserine.

This sequence belongs to the NAD(P)-dependent epimerase/dehydratase family. Dihydroflavonol-4-reductase subfamily.

This is an uncharacterized protein from Saccharomyces cerevisiae (strain ATCC 204508 / S288c) (Baker's yeast).